Here is a 102-residue protein sequence, read N- to C-terminus: Large ribosomal subunit protein mL63 (102 aa).

The protein belongs to the mitochondrion-specific ribosomal protein mL63 family. As to quaternary structure, component of the mitochondrial large ribosomal subunit (mt-LSU). Mature mammalian 55S mitochondrial ribosomes consist of a small (28S) and a large (39S) subunit. The 28S small subunit contains a 12S ribosomal RNA (12S mt-rRNA) and 30 different proteins. The 39S large subunit contains a 16S rRNA (16S mt-rRNA), a copy of mitochondrial valine transfer RNA (mt-tRNA(Val)), which plays an integral structural role, and 52 different proteins.

It is found in the mitochondrion. The polypeptide is Large ribosomal subunit protein mL63 (MRPL57) (Homo sapiens (Human)).